A 423-amino-acid polypeptide reads, in one-letter code: UPF0229 protein PST_0721 (423 aa).

The tract at residues 84-109 is disordered; sequence AGERIPRPQGGGGGQGAGQASNSGEG.

It belongs to the UPF0229 family.

The polypeptide is UPF0229 protein PST_0721 (Stutzerimonas stutzeri (strain A1501) (Pseudomonas stutzeri)).